The primary structure comprises 359 residues: 3-dehydroquinate synthase (359 aa).

NAD(+) contacts are provided by residues 71–76 (DGEQYK), 105–109 (GVIGD), 129–130 (TT), Lys142, Lys151, and 169–172 (CLAT). 3 residues coordinate Zn(2+): Glu184, His247, and His264.

It belongs to the sugar phosphate cyclases superfamily. Dehydroquinate synthase family. Co(2+) is required as a cofactor. Requires Zn(2+) as cofactor. It depends on NAD(+) as a cofactor.

The protein localises to the cytoplasm. The catalysed reaction is 7-phospho-2-dehydro-3-deoxy-D-arabino-heptonate = 3-dehydroquinate + phosphate. It participates in metabolic intermediate biosynthesis; chorismate biosynthesis; chorismate from D-erythrose 4-phosphate and phosphoenolpyruvate: step 2/7. In terms of biological role, catalyzes the conversion of 3-deoxy-D-arabino-heptulosonate 7-phosphate (DAHP) to dehydroquinate (DHQ). In Baumannia cicadellinicola subsp. Homalodisca coagulata, this protein is 3-dehydroquinate synthase.